The chain runs to 880 residues: Alanine--tRNA ligase (880 aa).

Histidine 567, histidine 571, cysteine 669, and histidine 673 together coordinate Zn(2+).

Belongs to the class-II aminoacyl-tRNA synthetase family. Requires Zn(2+) as cofactor.

It localises to the cytoplasm. It catalyses the reaction tRNA(Ala) + L-alanine + ATP = L-alanyl-tRNA(Ala) + AMP + diphosphate. Its function is as follows. Catalyzes the attachment of alanine to tRNA(Ala) in a two-step reaction: alanine is first activated by ATP to form Ala-AMP and then transferred to the acceptor end of tRNA(Ala). Also edits incorrectly charged Ser-tRNA(Ala) and Gly-tRNA(Ala) via its editing domain. This Bacillus thuringiensis (strain Al Hakam) protein is Alanine--tRNA ligase.